Here is a 298-residue protein sequence, read N- to C-terminus: MSTADKSLSGWAPAKVNLYLHVGPPKPNGRHDLESLVMFSGSGAADHLTAEPAEGLSLSVAGPFAAAAGAGDDNLVLQAARALQAASGTQQGARLSLKKWLPVAAGIGGGSSDAATALRLLTKLWALDPNHAIALAPGLGGDVPVALAGQPSLMRGEGERVTPLPALPPVYAVLVNPGVPCPTGPVFRDHDAAGGGAGFAEIDPPPEFSGPKAFAAWLGQQRNDLESPAIARVPEIGAVLEFLRAQPGVLLARMSGSGATCFALCEALAFAERATAVIAHDAHKAHWWTAASRLGAAP.

Lys-15 is a catalytic residue. ATP is bound at residue 102-112 (PVAAGIGGGSS). The active site involves Asp-142.

It belongs to the GHMP kinase family. IspE subfamily.

It catalyses the reaction 4-CDP-2-C-methyl-D-erythritol + ATP = 4-CDP-2-C-methyl-D-erythritol 2-phosphate + ADP + H(+). It functions in the pathway isoprenoid biosynthesis; isopentenyl diphosphate biosynthesis via DXP pathway; isopentenyl diphosphate from 1-deoxy-D-xylulose 5-phosphate: step 3/6. Catalyzes the phosphorylation of the position 2 hydroxy group of 4-diphosphocytidyl-2C-methyl-D-erythritol. This is 4-diphosphocytidyl-2-C-methyl-D-erythritol kinase from Hyphomonas neptunium (strain ATCC 15444).